A 271-amino-acid polypeptide reads, in one-letter code: Large ribosomal subunit protein uL2 (271 aa).

Positions 221–271 (RGVAMNPVDHPMGGGEGKSSGGHPRNRNGIPSNGFKTRNKKKITNKYIIKK) are disordered. Residues 257–271 (TRNKKKITNKYIIKK) show a composition bias toward basic residues.

This sequence belongs to the universal ribosomal protein uL2 family. Part of the 50S ribosomal subunit. Forms a bridge to the 30S subunit in the 70S ribosome.

Its function is as follows. One of the primary rRNA binding proteins. Required for association of the 30S and 50S subunits to form the 70S ribosome, for tRNA binding and peptide bond formation. It has been suggested to have peptidyltransferase activity; this is somewhat controversial. Makes several contacts with the 16S rRNA in the 70S ribosome. The polypeptide is Large ribosomal subunit protein uL2 (Karelsulcia muelleri (strain GWSS) (Sulcia muelleri)).